We begin with the raw amino-acid sequence, 339 residues long: MTQAQTVAVQSDAIPMAAPAPQRWRVADVVALFELPFNDLMFRAQQVHREHFDANAVQLSTLLSIKTGGCEEDCGYCSQSSHHDTGLKAEKLMDVDTVLDAARAAKANGASRFCMGAAWRNPKERHMPALTEMVRGVKELGLETCMTLGMLEDEQARQLADAGLDYYNHNLDTSPEFYGQVISTRTYQDRLDTLDRVRDAGINVCCGGIIGMGESRRERAGLISQLANLNPYPESVPINNLVAIEGTPLEGTAPLDPFEFVRTIAVARITMPKAVVRLSAGREQLDDAMQAMCFLAGANSMFYGDQLLTTSNPQTQRDRALFERLGIRASQADALSDNA.

The region spanning 55-282 is the Radical SAM core domain; it reads NAVQLSTLLS…KAVVRLSAGR (228 aa). The [4Fe-4S] cluster site is built by Cys-70, Cys-74, and Cys-77. Positions 114, 145, 205, and 277 each coordinate [2Fe-2S] cluster.

The protein belongs to the radical SAM superfamily. Biotin synthase family. In terms of assembly, homodimer. [4Fe-4S] cluster is required as a cofactor. The cofactor is [2Fe-2S] cluster.

The catalysed reaction is (4R,5S)-dethiobiotin + (sulfur carrier)-SH + 2 reduced [2Fe-2S]-[ferredoxin] + 2 S-adenosyl-L-methionine = (sulfur carrier)-H + biotin + 2 5'-deoxyadenosine + 2 L-methionine + 2 oxidized [2Fe-2S]-[ferredoxin]. It functions in the pathway cofactor biosynthesis; biotin biosynthesis; biotin from 7,8-diaminononanoate: step 2/2. Its function is as follows. Catalyzes the conversion of dethiobiotin (DTB) to biotin by the insertion of a sulfur atom into dethiobiotin via a radical-based mechanism. This Burkholderia cenocepacia (strain ATCC BAA-245 / DSM 16553 / LMG 16656 / NCTC 13227 / J2315 / CF5610) (Burkholderia cepacia (strain J2315)) protein is Biotin synthase.